Consider the following 195-residue polypeptide: MRLRFSVPLFFFGCVFVHGVFAGPFPPPGMSLPEYWGEEHVWWDGRATFHGEVVRPACTLAMEDAWQIIDMGETPVRDLQNGFSGPERKFSLRLRNCEFNSQGGNLFSDSRIRVTFDGVRGETPDKFNLSGQAKGINLQIADARGNIARAGKVMPAIPLTGNEEALDYTLRIVRNGKKLEAGNYFAVLGFRVDYE.

A signal peptide spans 1–22; it reads MRLRFSVPLFFFGCVFVHGVFA. Cysteines 58 and 97 form a disulfide.

This sequence belongs to the fimbrial protein family.

The protein localises to the secreted. The protein resides in the fimbrium. In terms of biological role, fimbriae (also called pili), polar filaments radiating from the surface of the bacterium to a length of 0.5-1.5 micrometers and numbering 100-300 per cell, enable bacteria to colonize the epithelium of specific host organs. Its function is as follows. Seems to anchor the pilus to the bacterial cell. In addition the stoichiometric relationship between PrsH and PrsA determines the pilus length. This Escherichia coli protein is PRS fimbrial minor pilin protein (prsH).